The sequence spans 1168 residues: DNA-directed RNA polymerase subunit beta (1168 aa).

Belongs to the RNA polymerase beta chain family. In terms of assembly, the RNAP catalytic core consists of 2 alpha, 1 beta, 1 beta' and 1 omega subunit. When a sigma factor is associated with the core the holoenzyme is formed, which can initiate transcription.

It carries out the reaction RNA(n) + a ribonucleoside 5'-triphosphate = RNA(n+1) + diphosphate. Its function is as follows. DNA-dependent RNA polymerase catalyzes the transcription of DNA into RNA using the four ribonucleoside triphosphates as substrates. The protein is DNA-directed RNA polymerase subunit beta of Rhodococcus opacus (strain B4).